A 196-amino-acid chain; its full sequence is V-type proton ATPase subunit E (196 aa).

This sequence belongs to the V-ATPase E subunit family.

In terms of biological role, produces ATP from ADP in the presence of a proton gradient across the membrane. In Clostridium botulinum (strain Alaska E43 / Type E3), this protein is V-type proton ATPase subunit E.